A 403-amino-acid polypeptide reads, in one-letter code: MALLSAMKLQGRPPPISSNLNPNSKPAGSDSVSLNASEPGSERKPRKFSSQLNRWNRARTLRSGAKLDSTITNGSNNTTGPMRPIESSSRTDVSTLDSDVSSSSNGVSEADMTAAKSIYIVSDGTGWTAEHAVNAALGQFDYCLVDRGCPVNTHLFSGIEDGEKLMEIIKQAAREGAMVIYTLADPSMAEATMRACKLWKIPSLDILGPITESISSHLGTNPSGLSRGITNSSLNEDYFKRIEAIEFTIKHDDGALPENLEKADIVLVGVSRTGKTPLSTYLAQKGYKVSNVPIVNGVDLPKTLFEIDPRKVFGLMINPLVLQGIREARAKSLGLGSSFKTKYSELGSVKEELELAKKIFAENPTWPVIEVTESAIEETAAVVLRLYDERQSNRAMPRISKSY.

Residues Met1 to Glu86 constitute a chloroplast transit peptide. Positions Met1–Ser108 are disordered. Composition is skewed to low complexity over residues Ser17–Pro26, Ser69–Gly80, and Ser87–Ser108. Position 269–276 (Gly269–Thr276) interacts with ADP.

It belongs to the pyruvate, phosphate/water dikinase regulatory protein family. PDRP subfamily. In terms of assembly, interacts with PPDK1. As to expression, expressed in green tissues.

The protein resides in the plastid. It is found in the chloroplast stroma. It carries out the reaction N(tele)-phospho-L-histidyl/L-threonyl-[pyruvate, phosphate dikinase] + ADP = N(tele)-phospho-L-histidyl/O-phospho-L-threonyl-[pyruvate, phosphate dikinase] + AMP + H(+). The catalysed reaction is N(tele)-phospho-L-histidyl/O-phospho-L-threonyl-[pyruvate, phosphate dikinase] + phosphate + H(+) = N(tele)-phospho-L-histidyl/L-threonyl-[pyruvate, phosphate dikinase] + diphosphate. Its activity is regulated as follows. Regulated by light/dark exposure. Its function is as follows. Bifunctional serine/threonine kinase and phosphorylase involved in the dark/light-mediated regulation of PPDK by catalyzing its phosphorylation/dephosphorylation. Dark/light-induced changes in stromal concentrations of the competing ADP and Pi substrates govern the direction of the reaction. In the dark, phosphorylates the catalytic intermediate of PPDK (PPDK-HisP), inactivating it. Light exposure induces the phosphorolysis reaction that reactivates PPDK. Unlike the kinase function which can utilize either Thr or Ser as target, the phosphorylase function has a strict substrate requirement for threonyl phosphate. This Arabidopsis thaliana (Mouse-ear cress) protein is Pyruvate, phosphate dikinase regulatory protein 1, chloroplastic (RP1).